Consider the following 205-residue polypeptide: ATP phosphoribosyltransferase (205 aa).

It belongs to the ATP phosphoribosyltransferase family. Short subfamily. In terms of assembly, heteromultimer composed of HisG and HisZ subunits.

It localises to the cytoplasm. It catalyses the reaction 1-(5-phospho-beta-D-ribosyl)-ATP + diphosphate = 5-phospho-alpha-D-ribose 1-diphosphate + ATP. The protein operates within amino-acid biosynthesis; L-histidine biosynthesis; L-histidine from 5-phospho-alpha-D-ribose 1-diphosphate: step 1/9. Its function is as follows. Catalyzes the condensation of ATP and 5-phosphoribose 1-diphosphate to form N'-(5'-phosphoribosyl)-ATP (PR-ATP). Has a crucial role in the pathway because the rate of histidine biosynthesis seems to be controlled primarily by regulation of HisG enzymatic activity. This chain is ATP phosphoribosyltransferase, found in Leptospira interrogans serogroup Icterohaemorrhagiae serovar Lai (strain 56601).